Here is a 575-residue protein sequence, read N- to C-terminus: E3 ubiquitin-protein ligase kcmf-1 (575 aa).

Residues 9–73 (HEGVSCDGCA…PMQLILSSVD (65 aa)) form a ZZ-type zinc finger. Positions 14, 17, 29, 32, 38, 41, 59, and 63 each coordinate Zn(2+). 2 disordered regions span residues 277 to 306 (PIYP…DDND) and 530 to 575 (EADE…INID). Composition is skewed to acidic residues over residues 297–306 (SADESEDDND) and 530–563 (EADE…ENDS).

It belongs to the KCMF1 family.

It localises to the cytoplasm. The protein resides in the late endosome. Its subcellular location is the lysosome. The catalysed reaction is S-ubiquitinyl-[E2 ubiquitin-conjugating enzyme]-L-cysteine + [acceptor protein]-L-lysine = [E2 ubiquitin-conjugating enzyme]-L-cysteine + N(6)-ubiquitinyl-[acceptor protein]-L-lysine.. Its pathway is protein modification; protein ubiquitination. In terms of biological role, E3 ubiquitin-protein ligase which accepts ubiquitin from an E2 ubiquitin-conjugating enzyme and then transfers it to targeted substrates, promoting their degradation by the proteasome. In Caenorhabditis elegans, this protein is E3 ubiquitin-protein ligase kcmf-1.